Consider the following 334-residue polypeptide: tRNA dimethylallyltransferase (334 aa).

Residue Gly-23–Thr-30 participates in ATP binding. Residue Thr-25 to Thr-30 participates in substrate binding. Interaction with substrate tRNA regions lie at residues Asp-53–Leu-56 and Gln-177–Arg-181.

This sequence belongs to the IPP transferase family. As to quaternary structure, monomer. The cofactor is Mg(2+).

The catalysed reaction is adenosine(37) in tRNA + dimethylallyl diphosphate = N(6)-dimethylallyladenosine(37) in tRNA + diphosphate. Catalyzes the transfer of a dimethylallyl group onto the adenine at position 37 in tRNAs that read codons beginning with uridine, leading to the formation of N6-(dimethylallyl)adenosine (i(6)A). The polypeptide is tRNA dimethylallyltransferase (Polynucleobacter necessarius subsp. necessarius (strain STIR1)).